The primary structure comprises 153 residues: uncharacterized protein (153 aa).

Helical transmembrane passes span 1–21 and 106–126; these read MAAT…LFFS and IVPI…TVYI.

The protein localises to the membrane. This is an uncharacterized protein from Saccharomyces cerevisiae (strain ATCC 204508 / S288c) (Baker's yeast).